The sequence spans 600 residues: Glutamine--fructose-6-phosphate aminotransferase [isomerizing] (600 aa).

The active-site Nucleophile; for GATase activity is the C2. Residues 2–217 (CGIVGYIGQN…DKEIVLVSRN (216 aa)) form the Glutamine amidotransferase type-2 domain. SIS domains follow at residues 283–422 (IRTA…VKGL) and 452–590 (LARD…VDKP). K595 acts as the For Fru-6P isomerization activity in catalysis.

Homodimer.

The protein resides in the cytoplasm. It catalyses the reaction D-fructose 6-phosphate + L-glutamine = D-glucosamine 6-phosphate + L-glutamate. Its function is as follows. Catalyzes the first step in hexosamine metabolism, converting fructose-6P into glucosamine-6P using glutamine as a nitrogen source. In Oceanobacillus iheyensis (strain DSM 14371 / CIP 107618 / JCM 11309 / KCTC 3954 / HTE831), this protein is Glutamine--fructose-6-phosphate aminotransferase [isomerizing].